The primary structure comprises 136 residues: Group 1 truncated hemoglobin GlbN (136 aa).

Histidine 81 lines the heme pocket.

It belongs to the truncated hemoglobin family. Group I subfamily. Homodimer. It depends on heme as a cofactor.

Binds oxygen cooperatively with very high affinity (P(50) = 0.013 mmHg at 20 degrees Celsius) because of a fast combination (25 microM(-1)sec(-1)) and a slow dissociation (0.2 sec(-1)) rate. The polypeptide is Group 1 truncated hemoglobin GlbN (glbN) (Mycobacterium bovis (strain ATCC BAA-935 / AF2122/97)).